Here is a 119-residue protein sequence, read N- to C-terminus: Large ribosomal subunit protein bL20 (119 aa).

The protein belongs to the bacterial ribosomal protein bL20 family.

Binds directly to 23S ribosomal RNA and is necessary for the in vitro assembly process of the 50S ribosomal subunit. It is not involved in the protein synthesizing functions of that subunit. The protein is Large ribosomal subunit protein bL20 of Buchnera aphidicola subsp. Cinara cedri (strain Cc).